The sequence spans 332 residues: Ribosomal RNA small subunit methyltransferase C (332 aa).

The protein belongs to the methyltransferase superfamily. RsmC family. In terms of assembly, monomer.

The protein localises to the cytoplasm. The enzyme catalyses guanosine(1207) in 16S rRNA + S-adenosyl-L-methionine = N(2)-methylguanosine(1207) in 16S rRNA + S-adenosyl-L-homocysteine + H(+). Its function is as follows. Specifically methylates the guanine in position 1207 of 16S rRNA in the 30S particle. The polypeptide is Ribosomal RNA small subunit methyltransferase C (Pseudomonas syringae pv. syringae (strain B728a)).